A 257-amino-acid polypeptide reads, in one-letter code: PHD finger protein Alfin1 (257 aa).

The segment at 145 to 200 is disordered; sequence SKDQLTAHNNGSNSKYKSSGKSRQSESQTKGVKMSAPVKEEVDSGEEEEEDDDEQG. Residues 153–166 are compositionally biased toward low complexity; that stretch reads NNGSNSKYKSSGKS. Residues 187–199 show a composition bias toward acidic residues; sequence DSGEEEEEDDDEQ. The segment at 200-252 adopts a PHD-type zinc-finger fold; it reads GATCGACGDNYGTDEFWICCDMCEKWFHGKCVKITPAKAEHIKQYKCPGCSIK.

It belongs to the Alfin family. In terms of assembly, interacts with H3K4me3 and to a lesser extent with H3K4me2. As to expression, predominantly expressed in the roots.

The protein resides in the nucleus. Its function is as follows. Histone-binding component that specifically recognizes H3 tails trimethylated on 'Lys-4' (H3K4me3), which mark transcription start sites of virtually all active genes. Transcriptional regulator that binds specifically to DNA sequences 5'-GNGGTG-3' or 5'-GTGGNG-3', including promoter elements of the salt-inducible PRP2 gene. Plays a role in salinity tolerance. The polypeptide is PHD finger protein Alfin1 (ALFIN-1) (Medicago sativa (Alfalfa)).